The primary structure comprises 27 residues: uncharacterized protein (27 aa).

The protein resides in the plastid. Its subcellular location is the chloroplast. This is an uncharacterized protein from Trieres chinensis (Marine centric diatom).